Here is a 654-residue protein sequence, read N- to C-terminus: Dystrobrevin beta (654 aa).

M1 is subject to N-acetylmethionine. Residues T11, T69, T179, and T212 each carry the phosphothreonine modification. The ZZ-type zinc-finger motif lies at 238-294; sequence FHPVECSYCHCESMMGFRYRCQQCHNYQLCQNCFWRGHAGGPHSNQHQMKELSSWKS. Zn(2+)-binding residues include C243, C246, C258, C261, C267, C270, H280, and H284. A Phosphoserine modification is found at S394. Positions 399 to 448 are syntrophin-binding region; the sequence is DEEHRLIARYAARLAAEAGNMTRPPTDASFNFDANKQQRQLIAELENKNR. T424 is subject to Phosphothreonine. Positions 429-519 form a coiled coil; it reads NFDANKQQRQ…LEGLMKLLKA (91 aa). The disordered stretch occupies residues 520–562; that stretch reads QATGSPHTSPTHGGGRSMPMPVRSTSAGSTPTHGPQDSLSGVG. 2 stretches are compositionally biased toward polar residues: residues 521-530 and 542-558; these read ATGSPHTSPT and RSTS…QDSL.

This sequence belongs to the dystrophin family. Dystrobrevin subfamily. Interacts with dystrophin short form DP71 and syntrophins SNTG1 and SNTG2. Binds DTNBP1. Forms a specific complex composed of DMD, SNTB2 and SNTA1 in neuron; the interaction with SNTB2 and SNTA1 is DMD independent. Interacts with UTRN and dystrophin short form DP71 in the kidney and liver. Interacts with SNTB1, SNTB2 and SNTA1 in kidney and liver. Interacts with KIF5A. Interacts with HMG20A and HMG20B. Interacts with OLFM1. Interacts with PRKAR2B and PRKAR1A. In terms of processing, phosphorylated by PKA. Phosphorylation at Thr-11 alters the interaction with KIF5A. Expressed in neurons. In the isocortex, expressed most prominently in the somata (including the nuclei) and the dendrites of the pyramidal cells. Expressed in the hippocampus CA1, CA2, and CA3 neurons, namely in the initial segments of dendrites. Expressed in the Purkinje cells, molecular layer interneurons, and granule cells of cerebellum. Expressed in axon fascicles associated with the spinal trigeminal tract and in the internal capsule in the brainstem.

The protein localises to the cytoplasm. It is found in the postsynaptic density. Its subcellular location is the cell projection. It localises to the dendrite. The protein resides in the basal cell membrane. The protein localises to the postsynapse. It is found in the nucleus. Its function is as follows. Scaffolding protein that assembles DMD and SNTA1 molecules to the basal membrane of kidney cells and liver sinusoids. May function as a repressor of the SYN1 promoter through the binding of repressor element-1 (RE-1), in turn regulates SYN1 expression and may be involved in cell proliferation regulation during the early phase of neural differentiation. May be required for proper maturation and function of a subset of inhibitory synapses. The sequence is that of Dystrobrevin beta from Rattus norvegicus (Rat).